The chain runs to 534 residues: MKFTLGLGSRAWRVSWEGAAAAAAGPGAGGSALRCRAQRVSSPRLGRRGSRLSGALPLCLSRGGGGAQALPDCAGPSPGHPGHPGARQLAGPLAMEQTYGEVNQLGGVFVNGRPLPNAIRLRIVELAQLGIRPCDISRQLRVSHGCVSKILARYNETGSILPGAIGGSKPRVTTPNVVKHIRDYKQGDPGIFAWEIRDRLLADGVCDKYNVPSVSSISRILRNKIGSLAQPGPYEASKQPPSQPTLPYNHIYQYPYPSPVSPTGAKMGSHPGVPGTAGHVSIPRSWPSAHSVSNILGIRTFMEQTGALAGSEGTAYSPKMEDWAGVNRTAFPATPAVNGLEKPALEADIKYTQSASTLSAVGGFLPACAYPASNQHGVYSAPGGGYLAPGPPWPPAQGPPLAPPGAGVAVHGGELAAAMTFKHPSREGSLPAPAARPRTPSVAYTDCPSRPRPPRGSSPRTRARRERQADPGAQVCAAAPAIGTGRIGGLAEEEASAGPRGARPASPQAQPCLWPDPPHFLYWSGFLGFSELGF.

A DNA-binding region (paired) is located at residues 98–224 (TYGEVNQLGG…SSISRILRNK (127 aa)). Positions 101-157 (EVNQLGGVFVNGRPLPNAIRLRIVELAQLGIRPCDISRQLRVSHGCVSKILARYNET) are PAI subdomain. Residues 176–224 (NVVKHIRDYKQGDPGIFAWEIRDRLLADGVCDKYNVPSVSSISRILRNK) are RED subdomain. 2 disordered regions span residues 424-480 (PSRE…AAAP) and 492-511 (EEEASAGPRGARPASPQAQP).

It is found in the nucleus. Its function is as follows. This protein is a transcriptional activator. It may play a role in the formation of segmented structures of the embryo. May play an important role in the normal development of the vertebral column. The protein is Paired box protein Pax-1 (PAX1) of Homo sapiens (Human).